We begin with the raw amino-acid sequence, 754 residues long: Phosphoribosylformylglycinamidine synthase subunit PurL (754 aa).

Residue His-52 is part of the active site. Positions 55 and 95 each coordinate ATP. Glu-97 lines the Mg(2+) pocket. Substrate contacts are provided by residues 98 to 101 and Arg-120; that span reads SHNH. Catalysis depends on His-99, which acts as the Proton acceptor. Mg(2+) is bound at residue Asp-121. A substrate-binding site is contributed by Gln-244. Asp-272 is a binding site for Mg(2+). 316-318 provides a ligand contact to substrate; sequence ESQ. ATP-binding residues include Asn-504 and Gly-541. Asn-542 contributes to the Mg(2+) binding site. Position 544 (Ser-544) interacts with substrate.

The protein belongs to the FGAMS family. As to quaternary structure, monomer. Part of the FGAM synthase complex composed of 1 PurL, 1 PurQ and 2 PurS subunits.

It is found in the cytoplasm. It carries out the reaction N(2)-formyl-N(1)-(5-phospho-beta-D-ribosyl)glycinamide + L-glutamine + ATP + H2O = 2-formamido-N(1)-(5-O-phospho-beta-D-ribosyl)acetamidine + L-glutamate + ADP + phosphate + H(+). The protein operates within purine metabolism; IMP biosynthesis via de novo pathway; 5-amino-1-(5-phospho-D-ribosyl)imidazole from N(2)-formyl-N(1)-(5-phospho-D-ribosyl)glycinamide: step 1/2. In terms of biological role, part of the phosphoribosylformylglycinamidine synthase complex involved in the purines biosynthetic pathway. Catalyzes the ATP-dependent conversion of formylglycinamide ribonucleotide (FGAR) and glutamine to yield formylglycinamidine ribonucleotide (FGAM) and glutamate. The FGAM synthase complex is composed of three subunits. PurQ produces an ammonia molecule by converting glutamine to glutamate. PurL transfers the ammonia molecule to FGAR to form FGAM in an ATP-dependent manner. PurS interacts with PurQ and PurL and is thought to assist in the transfer of the ammonia molecule from PurQ to PurL. This chain is Phosphoribosylformylglycinamidine synthase subunit PurL, found in Salinibacter ruber (strain DSM 13855 / M31).